The sequence spans 77 residues: Large ribosomal subunit protein bL31 (77 aa).

It belongs to the bacterial ribosomal protein bL31 family. Type A subfamily. In terms of assembly, part of the 50S ribosomal subunit.

Binds the 23S rRNA. In Synechococcus elongatus (strain ATCC 33912 / PCC 7942 / FACHB-805) (Anacystis nidulans R2), this protein is Large ribosomal subunit protein bL31.